Consider the following 101-residue polypeptide: UPF0235 protein Mevan_0378 (101 aa).

Belongs to the UPF0235 family.

This Methanococcus vannielii (strain ATCC 35089 / DSM 1224 / JCM 13029 / OCM 148 / SB) protein is UPF0235 protein Mevan_0378.